Reading from the N-terminus, the 554-residue chain is Probable ATP-binding cassette sub-family F member 3 homolog (554 aa).

2 ABC transporter domains span residues 89 to 285 and 351 to 554; these read GDLH…ASAR and IEFV…GLGV. Residues 122-129 and 383-390 each bind ATP; these read GRNGIGKT and GANGQGKS.

The protein belongs to the ABC transporter superfamily. ABCF family. EF3 subfamily.

The polypeptide is Probable ATP-binding cassette sub-family F member 3 homolog (Encephalitozoon cuniculi (strain GB-M1) (Microsporidian parasite)).